The chain runs to 440 residues: Branched-chain amino acid permease BrnQ (440 aa).

The next 12 membrane-spanning stretches (helical) occupy residues 9–29 (YIIIIGLMLFALFFGAGNLIF), 46–66 (AGFLVTGVGLPLLAITAFVFS), 80–100 (PVFGIVFTTILYLAIGPFFAI), 121–141 (SPVSLIIFTILFFALACLLSL), 149–169 (IVGKFLTPIKLTFIGLLVAVA), 196–216 (GYLTLDALVAFVFGIIIVNAL), 227–247 (LIVVCAKAAAIAAVLLAVMYT), 284–304 (ILLGLMITVACLTTSVGLITA), 321–341 (IAVVLSVFSTLVANIGLTQLI), 348–368 (LLTMYPIAISLIFLTFLHSVF), 378–398 (SLLFAFIISLFDGLKAAGIKI), and 414–434 (IGLGWLIPAIAGGICGYILSI).

It belongs to the branched chain amino acid transporter family.

It localises to the cell membrane. In terms of biological role, branched-chain amino acid transport system which is involved in the uptake of isoleucine and valine. Probably does not transport leucine. Together with BcaP and BraB, plays an important role in the activation of CodY, a branched-chain amino acid-responsive transcriptional regulator that controls the expression of several dozen transcription units in B.subtilis. The polypeptide is Branched-chain amino acid permease BrnQ (Bacillus subtilis (strain 168)).